A 402-amino-acid polypeptide reads, in one-letter code: Flavohemoprotein (402 aa).

In terms of domain architecture, Globin spans 1–138 (MLSPEVRALV…LADLLIGRER (138 aa)). Histidine 85 is a heme b binding site. Residues tyrosine 95 and glutamate 137 each act as charge relay system in the active site. The segment at 149-402 (GGWTGWRAFK…AEVFGTGGVA (254 aa)) is reductase. In terms of domain architecture, FAD-binding FR-type spans 152 to 261 (TGWRAFKVVR…SPPQGDFTLD (110 aa)). FAD is bound by residues tyrosine 190 and 206 to 209 (RQYS). Position 274–279 (274–279 (GVGLTP)) interacts with NADP(+). 395–398 (VFGT) serves as a coordination point for FAD.

This sequence belongs to the globin family. Two-domain flavohemoproteins subfamily. It in the C-terminal section; belongs to the flavoprotein pyridine nucleotide cytochrome reductase family. It depends on heme b as a cofactor. The cofactor is FAD.

The enzyme catalyses 2 nitric oxide + NADPH + 2 O2 = 2 nitrate + NADP(+) + H(+). It carries out the reaction 2 nitric oxide + NADH + 2 O2 = 2 nitrate + NAD(+) + H(+). Functionally, is involved in NO detoxification in an aerobic process, termed nitric oxide dioxygenase (NOD) reaction that utilizes O(2) and NAD(P)H to convert NO to nitrate, which protects the bacterium from various noxious nitrogen compounds. Therefore, plays a central role in the inducible response to nitrosative stress. In Bordetella bronchiseptica (strain ATCC BAA-588 / NCTC 13252 / RB50) (Alcaligenes bronchisepticus), this protein is Flavohemoprotein.